The sequence spans 60 residues: uncharacterized protein (60 aa).

This is an uncharacterized protein from Homo sapiens (Human).